The primary structure comprises 285 residues: Probable nudix hydrolase C6G9.05 (285 aa).

The Nudix hydrolase domain maps to 114–254 (TRFASVLMPL…DLLYVEFNID (141 aa)). The short motif at 153–175 (GRVEPSDGSHYYAALRETYEEIG) is the Nudix box element. 2 residues coordinate Mg(2+): E169 and E173.

It belongs to the Nudix hydrolase family. PCD1 subfamily. Mn(2+) serves as cofactor. Mg(2+) is required as a cofactor.

Its function is as follows. Probably mediates the hydrolysis of some nucleoside diphosphate derivatives. The polypeptide is Probable nudix hydrolase C6G9.05 (Schizosaccharomyces pombe (strain 972 / ATCC 24843) (Fission yeast)).